Reading from the N-terminus, the 421-residue chain is Testin (421 aa).

The region spanning 92-199 (MILTNPVAAK…GDVKLPCEMD (108 aa)) is the PET domain. Residues 133–164 (EKQPVAGSEGAQYRKKQLAKQLPAHDQDPSKC) form a disordered region. Residues 155 to 164 (PAHDQDPSKC) are compositionally biased toward basic and acidic residues. 3 consecutive LIM zinc-binding domains span residues 234–297 (YSCY…CDSE), 299–359 (PRCA…NHAV), and 362–421 (QGCH…KMMS).

The protein belongs to the prickle / espinas / testin family. In terms of assembly, interacts via LIM domain 1 with ZYX. Interacts (via LIM domain 3) with ENAH and VASP. Interacts with ALKBH4, talin, actin, alpha-actinin, GRIP1 and PXN. Interacts (via LIM domain 2) with ACTL7A (via N-terminus). Heterodimer with ACTL7A; the heterodimer interacts with ENAH to form a heterotrimer.

The protein localises to the cytoplasm. The protein resides in the cell junction. It is found in the focal adhesion. Scaffold protein that may play a role in cell adhesion, cell spreading and in the reorganization of the actin cytoskeleton. Plays a role in the regulation of cell proliferation. May act as a tumor suppressor. The protein is Testin (TES) of Aotus nancymaae (Ma's night monkey).